We begin with the raw amino-acid sequence, 442 residues long: 4-hydroxyphenylpyruvate dioxygenase (442 aa).

2 VOC domains span residues 45-200 (RFHH…GFEA) and 216-376 (RLDH…IFTK). Residues His-219, His-301, and Glu-387 each contribute to the Fe cation site.

This sequence belongs to the 4HPPD family. Fe cation is required as a cofactor.

The protein localises to the cytoplasm. The catalysed reaction is 3-(4-hydroxyphenyl)pyruvate + O2 = homogentisate + CO2. The protein operates within amino-acid degradation; L-phenylalanine degradation; acetoacetate and fumarate from L-phenylalanine: step 3/6. It functions in the pathway cofactor biosynthesis; prenylquinone biosynthesis. This chain is 4-hydroxyphenylpyruvate dioxygenase, found in Daucus carota (Wild carrot).